Consider the following 1382-residue polypeptide: Hepatocyte growth factor receptor (1382 aa).

The first 24 residues, 1–24 (MKASAVLAPGILALLFTLVQGNDG), serve as a signal peptide directing secretion. Topologically, residues 25 to 933 (ECQEALAKSE…VIVQPDQNFT (909 aa)) are extracellular. The 490-residue stretch at 27-516 (QEALAKSEMN…TGKKITKIPL (490 aa)) folds into the Sema domain. Residues asparagine 45, asparagine 100, and asparagine 106 are each glycosylated (N-linked (GlcNAc...) asparagine). Intrachain disulfides connect cysteine 95-cysteine 101, cysteine 98-cysteine 160, cysteine 133-cysteine 141, and cysteine 173-cysteine 176. Asparagine 203 and asparagine 359 each carry an N-linked (GlcNAc...) asparagine glycan. 2 disulfides stabilise this stretch: cysteine 299/cysteine 364 and cysteine 386/cysteine 398. N-linked (GlcNAc...) asparagine glycans are attached at residues asparagine 400 and asparagine 406. 4 disulfide bridges follow: cysteine 521/cysteine 539, cysteine 527/cysteine 562, cysteine 530/cysteine 546, and cysteine 542/cysteine 552. 3 consecutive IPT/TIG domains span residues 564 to 656 (PAIH…FSYV), 658 to 740 (PVIT…FSYR), and 743 to 837 (PIVH…LIYV). Threonine 583 carries an O-linked (Man) threonine glycan. Asparagine 608 and asparagine 636 each carry an N-linked (GlcNAc...) asparagine glycan. 2 O-linked (Man) threonine glycosylation sites follow: threonine 677 and threonine 762. 3 N-linked (GlcNAc...) asparagine glycosylation sites follow: asparagine 786, asparagine 880, and asparagine 931. A helical transmembrane segment spans residues 934–956 (GLIVGVVSISIILLLLLGLFLWM). Topologically, residues 957 to 1382 (KKRKQIKDLG…QDNVNGEVDT (426 aa)) are cytoplasmic. Residue serine 967 is modified to Phosphoserine. Threonine 978 carries the phosphothreonine modification. Serine 991, serine 998, and serine 1001 each carry phosphoserine. Residue tyrosine 1004 is modified to Phosphotyrosine. The Protein kinase domain maps to 1079 to 1346 (VHFNEVIGRG…RISAIFSTFI (268 aa)). Residues 1085–1093 (IGRGHFGCV) and lysine 1111 contribute to the ATP site. Catalysis depends on aspartate 1205, which acts as the Proton acceptor. The segment at 1213 to 1382 (LDEKFTVKVA…QDNVNGEVDT (170 aa)) is interaction with RANBP9. Position 1231 is a phosphotyrosine (tyrosine 1231). A phosphotyrosine; by autocatalysis mark is found at tyrosine 1235 and tyrosine 1236. Threonine 1290 carries the post-translational modification Phosphothreonine. The interaction with MUC20 stretch occupies residues 1321–1360 (WHPKAEMRPSFSELVSRISAIFSTFIGEHYVHVNATYVNV). Phosphotyrosine; by autocatalysis occurs at positions 1350 and 1357. The residue at position 1366 (tyrosine 1366) is a Phosphotyrosine.

Belongs to the protein kinase superfamily. Tyr protein kinase family. In terms of assembly, heterodimer made of an alpha chain (50 kDa) and a beta chain (145 kDa) which are disulfide linked. Binds PLXNB1. Interacts when phosphorylated with downstream effectors including STAT3, PIK3R1, SRC, PCLG1, GRB2 and GAB1. Interacts with SPSB1, SPSB2 and SPSB4. Interacts with INPP5D/SHIP1. When phosphorylated at Tyr-1357, interacts with INPPL1/SHIP2. Interacts with RANBP9 and RANBP10, as well as SPSB1, SPSB2, SPSB3 and SPSB4. SPSB1 binding occurs in the presence and in the absence of HGF, however HGF treatment has a positive effect on this interaction. Interacts with MUC20; prevents interaction with GRB2 and suppresses hepatocyte growth factor-induced cell proliferation. Interacts with GRB10. Interacts with PTPN1 and PTPN2. Interacts with HSP90AA1 and HSP90AB1; the interaction suppresses MET kinase activity. Interacts with tensin TNS3. Interacts (when phosphorylated) with tensin TNS4 (via SH2 domain); the interaction increases MET protein stability by inhibiting MET endocytosis and subsequent lysosomal degradation. Autophosphorylated in response to ligand binding on Tyr-1235 and Tyr-1236 in the kinase domain leading to further phosphorylation of Tyr-1350 and Tyr-1357 in the C-terminal multifunctional docking site. Dephosphorylated by PTPRJ at Tyr-1350 and Tyr-1366. Dephosphorylated by PTPN1 and PTPN2. In terms of processing, ubiquitinated. Ubiquitination by CBL regulates the receptor stability and activity through proteasomal degradation. Post-translationally, O-mannosylation of IPT/TIG domains by TMEM260 is required for protein maturation. O-mannosylated residues are composed of single mannose glycans that are not elongated or modified.

The protein resides in the membrane. The catalysed reaction is L-tyrosyl-[protein] + ATP = O-phospho-L-tyrosyl-[protein] + ADP + H(+). Its activity is regulated as follows. In its inactive state, the C-terminal tail interacts with the catalytic domain and inhibits the kinase activity. Upon ligand binding, the C-terminal tail is displaced and becomes phosphorylated, thus increasing the kinase activity. Its function is as follows. Receptor tyrosine kinase that transduces signals from the extracellular matrix into the cytoplasm by binding to hepatocyte growth factor/HGF ligand. Regulates many physiological processes including proliferation, scattering, morphogenesis and survival. Ligand binding at the cell surface induces autophosphorylation of MET on its intracellular domain that provides docking sites for downstream signaling molecules. Following activation by ligand, interacts with the PI3-kinase subunit PIK3R1, PLCG1, SRC, GRB2, STAT3 or the adapter GAB1. Recruitment of these downstream effectors by MET leads to the activation of several signaling cascades including the RAS-ERK, PI3 kinase-AKT, or PLCgamma-PKC. The RAS-ERK activation is associated with the morphogenetic effects while PI3K/AKT coordinates prosurvival effects. During embryonic development, MET signaling plays a role in gastrulation, development and migration of muscles and neuronal precursors, angiogenesis and kidney formation. In adults, participates in wound healing as well as organ regeneration and tissue remodeling. Also promotes differentiation and proliferation of hematopoietic cells. In Eulemur macaco macaco (Black lemur), this protein is Hepatocyte growth factor receptor (MET).